We begin with the raw amino-acid sequence, 210 residues long: DNA-directed RNA polymerases I, II, and III subunit RPABC1 (210 aa).

N-acetylmethionine is present on Met1. Residue Lys81 forms a Glycyl lysine isopeptide (Lys-Gly) (interchain with G-Cter in SUMO2) linkage.

Belongs to the archaeal Rpo5/eukaryotic RPB5 RNA polymerase subunit family. In terms of assembly, component of the RNA polymerase I (Pol I), RNA polymerase II (Pol II) and RNA polymerase III (Pol III) complexes consisting of at least 13, 12 and 17 subunits, respectively. Pol I complex consists of a ten-subunit catalytic core composed of POLR1A/RPA1, POLR1B/RPA2, POLR1C/RPAC1, POLR1D/RPAC2, POLR1H/RPA12, POLR2E/RPABC1, POLR2F/RPABC2, POLR2H/RPABC3, POLR2K/RPABC4 and POLR2L/RPABC5; a mobile stalk subunit POLR1F/RPA43 protruding from the core and additional subunits homologous to general transcription factors POLR1E/RPA49 and POLR1G/RPA34. Part of Pol I pre-initiation complex (PIC), in which Pol I core assembles with RRN3 and promoter-bound UTBF and SL1/TIF-IB complex. Pol II complex contains a ten-subunit catalytic core composed of POLR2A/RPB1, POLR2B/RPB2, POLR2C/RPB3, POLR2I/RPB9, POLR2J/RPB11, POLR2E/RPABC1, POLR2F/RPABC2, POLR2H/RPABC3, POLR2K/RPABC4 and POLR2L/RPABC5 and a mobile stalk composed of two subunits POLR2D/RPB4 and POLR2G/RPB7. Part of Pol II(G) complex, in which Pol II core associates with an additional subunit POLR2M; unlike conventional Pol II, Pol II(G) functions as a transcriptional repressor. Part of TBP-based Pol II pre-initiation complex (PIC), in which Pol II core assembles with general transcription factors and other specific initiation factors including GTF2E1, GTF2E2, GTF2F1, GTF2F2, TCEA1, ERCC2, ERCC3, GTF2H2, GTF2H3, GTF2H4, GTF2H5, GTF2A1, GTF2A2, GTF2B and TBP; this large multi-subunit PIC complex mediates DNA unwinding and targets Pol II core to the transcription start site where the first phosphodiester bond forms. In Pol II complex, this subunit is present in 2-fold molar excess over the other subunits. Pol III complex consists of a ten-subunit catalytic core composed of POLR3A/RPC1, POLR3B/RPC2, POLR1C/RPAC1, POLR1D/RPAC2, POLR3K/RPC10, POLR2E/RPABC1, POLR2F/RPABC2, POLR2H/RPABC3, POLR2K/RPABC4 and POLR2L/RPABC5; a mobile stalk composed of two subunits POLR3H/RPC8 and CRCP/RPC9, protruding from the core and functioning primarily in transcription initiation; and additional subunits homologous to general transcription factors of the RNA polymerase II machinery, POLR3C/RPC3-POLR3F/RPC6-POLR3G/RPC7 heterotrimer required for transcription initiation and POLR3D/RPC4-POLR3E/RPC5 heterodimer involved in both transcription initiation and termination. Component of the PAQosome complex which is responsible for the biogenesis of several protein complexes and which consists of R2TP complex members RUVBL1, RUVBL2, RPAP3 and PIH1D1, URI complex members PFDN2, PFDN6, PDRG1, UXT and URI1 as well as ASDURF, POLR2E and DNAAF10/WDR92. Interacts with URI1.

Its subcellular location is the nucleus. It is found in the nucleolus. In terms of biological role, DNA-dependent RNA polymerase catalyzes the transcription of DNA into RNA using the four ribonucleoside triphosphates as substrates. Common component of RNA polymerases I, II and III which synthesize ribosomal RNA precursors, mRNA precursors and many functional non-coding RNAs, and small RNAs, such as 5S rRNA and tRNAs, respectively. Pol II is the central component of the basal RNA polymerase II transcription machinery. Pols are composed of mobile elements that move relative to each other. In Pol II, POLR2E/RPABC1 is part of the lower jaw surrounding the central large cleft and thought to grab the incoming DNA template. Seems to be the major component in this process. The polypeptide is DNA-directed RNA polymerases I, II, and III subunit RPABC1 (POLR2E) (Pongo abelii (Sumatran orangutan)).